A 333-amino-acid chain; its full sequence is MKPFPTHPDAIPAELQDVMDRLGTVAIEVANRIARGGIDEDLAGLCGTNTDGDGQKALDVIADDAFRAALEGSAVRFYASEEQDTAVTLNEAGTLALAIDPLDGSSNIDTNLSVGTIFAIWPAAATAEASFLRQGSELIAAGYVIYGPQVCMMVSFGKGTQKYVLDPGSRSFVLVDRAVKVPPSSTEFAINASNYRHWPKPIRAYIDDCVAGTEGPRGRNFNMRWLASLVAETHRILARGGVFLYPRDSRKGYEQGRLRYLYECAPIAFVITQAGGGATDGENPILGQTPSRLHARTPFVFGSAEKVARITAYHDLPEQETSALFGNRGLFRS.

Residues Glu-81, Asp-100, Leu-102, and Asp-103 each contribute to the Mg(2+) site. Residues 103-106 (DGSS) and Asn-191 each bind substrate. Glu-263 lines the Mg(2+) pocket.

This sequence belongs to the FBPase class 1 family. In terms of assembly, homotetramer. The cofactor is Mg(2+).

The protein localises to the cytoplasm. The catalysed reaction is beta-D-fructose 1,6-bisphosphate + H2O = beta-D-fructose 6-phosphate + phosphate. It functions in the pathway carbohydrate biosynthesis; Calvin cycle. The polypeptide is Fructose-1,6-bisphosphatase class 1 1 (Cereibacter sphaeroides (strain ATCC 17029 / ATH 2.4.9) (Rhodobacter sphaeroides)).